The primary structure comprises 232 residues: Rhamnogalacturonan acetylesterase RhgT (232 aa).

Ser14 acts as the Nucleophile in catalysis. Residues Glu191 and His195 contribute to the active site.

The protein belongs to the 'GDSL' lipolytic enzyme family. In terms of assembly, monomer.

Its activity is regulated as follows. Almost completely inhibited by diethylpyrocarbonate at 5 mM and completely inhibited by phenylmethylsulfonyl fluoride (PMSF) at 50 mM. Dimethyl phosphite achieves only a 53% inhibition. Also inhibited by metal ions (magnesium, manganese and calcium) and chelating agent (EDTA) at the same level. Its function is as follows. May play a role in the degradation of type I rhamnogalacturonan derived from plant cell walls. This enzyme has a broad substrate specificity, and shows strong preference for glucose pentaacetate, beta-naphthylacetate, and p-nitrophenyl acetate (pNPA). Also active toward acetylated xylan. The polypeptide is Rhamnogalacturonan acetylesterase RhgT (rhgT) (Bacillus subtilis (strain 168)).